We begin with the raw amino-acid sequence, 266 residues long: Zinc transporter ZupT (266 aa).

8 consecutive transmembrane segments (helical) span residues 8-28 (LLLTLLAGLSTGIGSAMALVV), 35-55 (FLTLALGFSAGVMLYVSFVEL), 70-90 (QAAAWVATLAFFGGIFFIWAI), 123-143 (GLFTAAAIAIHNFPEGMAVFF), 152-172 (GIVIATTIALHNIPEGMAIAV), 185-205 (FTYSFLSGLAEPLGAIVGFAI), 209-229 (WLSPPVFGSVLAAVAGIMVYI), and 246-266 (LAISGLIAGMAVMALSLLLLA). Residues Asn134 and Glu137 each contribute to the Fe(2+) site. 2 residues coordinate Zn(2+): Glu137 and His162. Residues Asn163, Glu166, and Glu195 each coordinate Fe(2+). Residue Glu166 participates in Zn(2+) binding.

Belongs to the ZIP transporter (TC 2.A.5) family. ZupT subfamily.

It localises to the cell membrane. The catalysed reaction is Zn(2+)(in) = Zn(2+)(out). Mediates zinc uptake. May also transport other divalent cations. The polypeptide is Zinc transporter ZupT (Chlorobium phaeovibrioides (strain DSM 265 / 1930) (Prosthecochloris vibrioformis (strain DSM 265))).